The chain runs to 302 residues: Phosphoribosylaminoimidazole-succinocarboxamide synthase (302 aa).

It belongs to the SAICAR synthetase family.

It carries out the reaction 5-amino-1-(5-phospho-D-ribosyl)imidazole-4-carboxylate + L-aspartate + ATP = (2S)-2-[5-amino-1-(5-phospho-beta-D-ribosyl)imidazole-4-carboxamido]succinate + ADP + phosphate + 2 H(+). The protein operates within purine metabolism; IMP biosynthesis via de novo pathway; 5-amino-1-(5-phospho-D-ribosyl)imidazole-4-carboxamide from 5-amino-1-(5-phospho-D-ribosyl)imidazole-4-carboxylate: step 1/2. The polypeptide is Phosphoribosylaminoimidazole-succinocarboxamide synthase (Ralstonia nicotianae (strain ATCC BAA-1114 / GMI1000) (Ralstonia solanacearum)).